The sequence spans 237 residues: Sugar fermentation stimulation protein homolog (237 aa).

This sequence belongs to the SfsA family.

This is Sugar fermentation stimulation protein homolog from Thioalkalivibrio sulfidiphilus (strain HL-EbGR7).